Consider the following 414-residue polypeptide: Methylthioribose-1-phosphate isomerase (414 aa).

The segment covering 205–215 has biased composition (polar residues); sequence SQSQGSENPPS. Residues 205 to 224 are disordered; sequence SQSQGSENPPSKKQKKDAAP. Asp283 serves as the catalytic Proton donor.

The protein belongs to the eIF-2B alpha/beta/delta subunits family. MtnA subfamily.

It localises to the cytoplasm. The protein resides in the nucleus. It carries out the reaction 5-(methylsulfanyl)-alpha-D-ribose 1-phosphate = 5-(methylsulfanyl)-D-ribulose 1-phosphate. It participates in amino-acid biosynthesis; L-methionine biosynthesis via salvage pathway; L-methionine from S-methyl-5-thio-alpha-D-ribose 1-phosphate: step 1/6. In terms of biological role, catalyzes the interconversion of methylthioribose-1-phosphate (MTR-1-P) into methylthioribulose-1-phosphate (MTRu-1-P). This Zygosaccharomyces rouxii (strain ATCC 2623 / CBS 732 / NBRC 1130 / NCYC 568 / NRRL Y-229) protein is Methylthioribose-1-phosphate isomerase.